The chain runs to 251 residues: Probable aquaporin TIP4-1 (251 aa).

The next 2 helical transmembrane spans lie at 26–46 (LVLT…AGVP) and 57–77 (ALAG…TAGF). The short motif at 85-87 (NPA) is the NPA 1 element. 3 consecutive transmembrane segments (helical) span residues 104 to 124 (ALYV…LRYL), 144 to 164 (GLVM…ATIL), and 170 to 190 (VPGF…IAGG). Residues 198-200 (NPA) carry the NPA 2 motif. The helical transmembrane segment at 219 to 239 (WLGPLIGGPLAGLVYESLFLV) threads the bilayer.

This sequence belongs to the MIP/aquaporin (TC 1.A.8) family. TIP (TC 1.A.8.10) subfamily. Expressed in roots, leaves and anthers.

The protein localises to the vacuole membrane. Functionally, aquaporins facilitate the transport of water and small neutral solutes across cell membranes. May be involved in transport from the vacuolar compartment to the cytoplasm. The sequence is that of Probable aquaporin TIP4-1 (TIP4-1) from Oryza sativa subsp. japonica (Rice).